The primary structure comprises 479 residues: Dihydrolipoyl dehydrogenase, mitochondrial (479 aa).

A mitochondrion-targeting transit peptide spans 1-19 (FNRXSPGLQGVSSVPLRTY). N6-acetyllysine; alternate is present on Lys-50. An N6-succinyllysine; alternate modification is found at Lys-50. Residues 55-64 (EKNETLGGTC) and Lys-73 contribute to the FAD site. An intrachain disulfide couples Cys-64 to Cys-69. N6-acetyllysine; alternate is present on residues Lys-88, Lys-106, Lys-116, and Lys-127. Lys-88, Lys-106, Lys-116, and Lys-127 each carry N6-succinyllysine; alternate. Gly-138 serves as a coordination point for FAD. N6-succinyllysine occurs at positions 143 and 150. Position 167–169 (167–169 (TGS)) interacts with FAD. Residues 204–211 (GAGVIGVE) and Glu-227 each bind NAD(+). 2 positions are modified to N6-succinyllysine: Lys-257 and Lys-261. Residue Val-262 coordinates NAD(+). Ser-269 is modified (phosphoserine). Gly-298 serves as a coordination point for NAD(+). At Lys-330 the chain carries N6-acetyllysine. FAD contacts are provided by residues Asp-339 and 345-348 (MLAH). At Lys-394 the chain carries N6-acetyllysine; alternate. At Lys-394 the chain carries N6-succinyllysine; alternate. N6-acetyllysine is present on residues Lys-401 and Lys-404. The residue at position 414 (Lys-414) is an N6-succinyllysine. Catalysis depends on His-471, which acts as the Proton acceptor.

It belongs to the class-I pyridine nucleotide-disulfide oxidoreductase family. As to quaternary structure, homodimer. Part of the multimeric pyruvate dehydrogenase complex that contains multiple copies of pyruvate dehydrogenase (subunits PDHA (PDHA1 or PDHA2) and PDHB, E1), dihydrolipoamide acetyltransferase (DLAT, E2) and lipoamide dehydrogenase (DLD, E3). These subunits are bound to an inner core composed of about 48 DLAT and 12 PDHX molecules (by non covalent bonds). The 2-oxoglutarate dehydrogenase complex is composed of OGDH (2-oxoglutarate dehydrogenase; E1), DLST (dihydrolipoamide succinyltransferase; E2) and DLD (dihydrolipoamide dehydrogenase; E3). It contains multiple copies of the three enzymatic components (E1, E2 and E3). In the nucleus, the 2-oxoglutarate dehydrogenase complex associates with KAT2A. Interacts with PDHX. Requires FAD as cofactor. Post-translationally, tyrosine phosphorylated. In terms of tissue distribution, expressed in testis (at protein level).

It localises to the mitochondrion matrix. It is found in the nucleus. The protein localises to the cell projection. The protein resides in the cilium. Its subcellular location is the flagellum. It localises to the cytoplasmic vesicle. It is found in the secretory vesicle. The protein localises to the acrosome. The enzyme catalyses N(6)-[(R)-dihydrolipoyl]-L-lysyl-[protein] + NAD(+) = N(6)-[(R)-lipoyl]-L-lysyl-[protein] + NADH + H(+). Lipoamide dehydrogenase is a component of the glycine cleavage system as well as an E3 component of three alpha-ketoacid dehydrogenase complexes (pyruvate-, alpha-ketoglutarate-, and branched-chain amino acid-dehydrogenase complex). The 2-oxoglutarate dehydrogenase complex is mainly active in the mitochondrion. A fraction of the 2-oxoglutarate dehydrogenase complex also localizes in the nucleus and is required for lysine succinylation of histones: associates with KAT2A on chromatin and provides succinyl-CoA to histone succinyltransferase KAT2A. In monomeric form may have additional moonlighting function as serine protease. Involved in the hyperactivation of spermatazoa during capacitation and in the spermatazoal acrosome reaction. This is Dihydrolipoyl dehydrogenase, mitochondrial (DLD) from Mesocricetus auratus (Golden hamster).